We begin with the raw amino-acid sequence, 279 residues long: Putative hydroxypyruvate isomerase (279 aa).

Residues glutamate 155 and glutamate 256 each act as proton donor/acceptor in the active site. The segment at 260–279 (GDDPSAQSFSWLPAGARAAR) is disordered.

The protein belongs to the hyi family.

It catalyses the reaction 3-hydroxypyruvate = 2-hydroxy-3-oxopropanoate. In terms of biological role, catalyzes the reversible isomerization between hydroxypyruvate and 2-hydroxy-3-oxopropanoate (also termed tartronate semialdehyde). This Streptomyces coelicolor (strain ATCC BAA-471 / A3(2) / M145) protein is Putative hydroxypyruvate isomerase.